Consider the following 223-residue polypeptide: Probable cytokinin riboside 5'-monophosphate phosphoribohydrolase LOGL1 (223 aa).

Residues glutamate 89, 107–108 (RK), 124–130 (GYGTMEE), and threonine 136 contribute to the substrate site. The disordered stretch occupies residues 201–223 (QEVAPRTSWEMSELGYGKTPEES).

It belongs to the LOG family. Expressed in shoot apex, immature inflorescences and flowers.

It catalyses the reaction N(6)-(dimethylallyl)adenosine 5'-phosphate + H2O = N(6)-dimethylallyladenine + D-ribose 5-phosphate. The catalysed reaction is 9-ribosyl-trans-zeatin 5'-phosphate + H2O = trans-zeatin + D-ribose 5-phosphate. In terms of biological role, cytokinin-activating enzyme working in the direct activation pathway. Phosphoribohydrolase that converts inactive cytokinin nucleotides to the biologically active free-base forms. In Oryza sativa subsp. japonica (Rice), this protein is Probable cytokinin riboside 5'-monophosphate phosphoribohydrolase LOGL1 (LOGL1).